The primary structure comprises 320 residues: Polynucleotide 5'-triphosphatase CTL1 (320 aa).

A compositionally biased stretch (polar residues) spans 1-12 (MSDQPETPSNSR). The tract at residues 1 to 23 (MSDQPETPSNSRNSHENVGAKKA) is disordered. The segment covering 13 to 23 (NSHENVGAKKA) has biased composition (basic and acidic residues).

This sequence belongs to the fungal TPase family. Requires Mg(2+) as cofactor. Mn(2+) is required as a cofactor.

It is found in the cytoplasm. The protein resides in the nucleus. The catalysed reaction is a 5'-end triphospho-ribonucleoside in mRNA + H2O = a 5'-end diphospho-ribonucleoside in mRNA + phosphate + H(+). In terms of biological role, probably involved in an RNA processing event other than mRNA capping. Releases gamma-phosphate from the 5'-end of RNA to produce a diphosphate terminus. This chain is Polynucleotide 5'-triphosphatase CTL1, found in Saccharomyces cerevisiae (strain ATCC 204508 / S288c) (Baker's yeast).